A 525-amino-acid chain; its full sequence is GMP synthase [glutamine-hydrolyzing] (525 aa).

The 200-residue stretch at 8–207 (KILILDFGSQ…ALDICGCKAN (200 aa)) folds into the Glutamine amidotransferase type-1 domain. The active-site Nucleophile is the Cys85. Active-site residues include His181 and Glu183. A GMPS ATP-PPase domain is found at 208-400 (WKPSSIIEDA…LGLPYNMLYR (193 aa)). 235–241 (SGGVDSS) is an ATP binding site.

In terms of assembly, homodimer.

It catalyses the reaction XMP + L-glutamine + ATP + H2O = GMP + L-glutamate + AMP + diphosphate + 2 H(+). It functions in the pathway purine metabolism; GMP biosynthesis; GMP from XMP (L-Gln route): step 1/1. Catalyzes the synthesis of GMP from XMP. The chain is GMP synthase [glutamine-hydrolyzing] from Shewanella frigidimarina (strain NCIMB 400).